We begin with the raw amino-acid sequence, 488 residues long: Nitrogen metabolite repression protein nmr (488 aa).

Positions 1–45 (MPAEILSELPLRPAPRDIKIPNAMHNEERRHKHSRSSYSEMSPLM) are disordered. Residues 14–29 (APRDIKIPNAMHNEER) are compositionally biased toward basic and acidic residues. Residues 36–45 (SSYSEMSPLM) are compositionally biased toward polar residues. Residues 71–76 (NAAGRQ), N165, K215, and 237–240 (YNNN) each bind NADP(+). NAD(+) is bound by residues 75-76 (RQ), 165-167 (NTT), K215, and 237-240 (YNNN). Residues 412-488 (EEYDGGGGNN…NKRADEEWLA (77 aa)) form a dispensable for NMR function region. Residues 422–488 (IGNNHNNHHQ…NKRADEEWLA (67 aa)) are disordered. Over residues 438-459 (HQNGHQNGHNGINGHIVNGGVD) the composition is skewed to low complexity. The segment covering 460–473 (SESEEEDSDSDDEG) has biased composition (acidic residues).

This sequence belongs to the NmrA-type oxidoreductase family. As to quaternary structure, interacts with nit-2.

It localises to the nucleus. May be a redox sensor protein. Negative transcriptional regulator involved in the post-transcriptional modulation of the GATA-type transcription factor nit-2, forming part of a system controlling nitrogen metabolite repression. This chain is Nitrogen metabolite repression protein nmr (nmr), found in Neurospora crassa (strain ATCC 24698 / 74-OR23-1A / CBS 708.71 / DSM 1257 / FGSC 987).